We begin with the raw amino-acid sequence, 518 residues long: Calcium and calcium/calmodulin-dependent serine/threonine-protein kinase (518 aa).

Residues 13 to 300 (YEISEILGRG…AQELLSHPWV (288 aa)) enclose the Protein kinase domain. Residues 19–27 (LGRGGFSVV) and Lys-44 each bind ATP. Asp-165 functions as the Proton acceptor in the catalytic mechanism. Thr-265 carries the phosphothreonine modification. Positions 323-336 (ARRKLRAAAIASVW) are calmodulin-binding. The stretch at 344 to 365 (TKKLRSLVGTYDLKEEEIESLR) forms a coiled coil. 3 EF-hand domains span residues 394-429 (SLIPLAPRIFDLFDNNRDGTIDMREILCGFSSLKNS), 430-465 (KGDDALRLCFQMYDTDRSGCITKEEVASMLCALPEE), and 472-507 (TEPGKLDEIFDLMDANSDGKVTFEEFKAAMQRDSSL). 15 residues coordinate Ca(2+): Asp-407, Asn-409, Asp-411, Thr-413, Glu-418, Asp-443, Asp-445, Ser-447, Cys-449, Glu-454, Asp-485, Asn-487, Asp-489, Lys-491, and Glu-496.

The protein belongs to the protein kinase superfamily. CAMK Ser/Thr protein kinase family. CaMK subfamily. As to quaternary structure, interacts with IPD3. Interacts with CIP73. Post-translationally, autophosphorylation stimulated by calcium. Occurs probably by an intermolecular mechanism. As to expression, mainly expressed in roots and nodules. Detected in leaves, stems and cotyledons.

It localises to the nucleus. It catalyses the reaction L-seryl-[protein] + ATP = O-phospho-L-seryl-[protein] + ADP + H(+). The enzyme catalyses L-threonyl-[protein] + ATP = O-phospho-L-threonyl-[protein] + ADP + H(+). Activated by calcium/calmodulin binding after calcium-induced autophosphorylation. Calcium- and calmodulin-dependent protein kinase necessary and sufficient for dedifferentiation of root cortical cells into nodule initials. Not required for calcium spiking. Acts as central regulator of the nodule organogenesis program. Required for root hair curling and infection thread (IT) formation upon rhizobial infection, and arbuscule formation during arbuscular mycorrhiza (AM) fungal infection. Phosphorylates the downstream target IPD3, a protein required for root infection by symbiotic rhizobia and AM fungi. Phosphorylates the downstream target CIP73, a protein required for root nodule organogenesis. Mediates the phosphorylation of leghemoglobins (e.g. LB1) to modulate their oxygen O(2) affinity, thus regulating the diffusion of oxygen to the bacteroids in nodules. The protein is Calcium and calcium/calmodulin-dependent serine/threonine-protein kinase of Lotus japonicus (Lotus corniculatus var. japonicus).